Consider the following 365-residue polypeptide: MGSTGETQMTPTQVSDEEAHLFAMQLASASVLPMILKTAIELDLLEIMAKAGPGAFLSTSEIASHLPTKNPDAPVMLDRILRLLASYSILTCSLKDLPDGKVERLYGLAPVCKFLTKNEDGVSVSPLCLMNQDKVLMESWYYLKDAILEGGIPFNKAYGMTAFEYHGTDPRFNKVFNKGMSDHSTITMKKILETYKGFEGLTSLVDVGGGTGAVVNTIVSKYPSIKGINFDLPHVIEDAPSYPGVEHVGGDMFVSVPNADAVFMKWICHDWSDAHCLKFLKNCYDALPENGKVILVECILPVAPDTSLATKGVVHVDVIMLAHNPGGKERTEKEFEGLANGAGFQGFEVMCCAFNTHVIEFRKKA.

Residue 130–136 coordinates substrate; the sequence is MNQDKVL. A substrate binding region spans residues 162 to 180; that stretch reads AFEYHGTDPRFNKVFNKGM. S-adenosyl-L-methionine contacts are provided by Gly-208, Asp-231, Asp-251, Met-252, and Lys-265. Catalysis depends on His-269, which acts as the Proton acceptor.

It belongs to the class I-like SAM-binding methyltransferase superfamily. Cation-independent O-methyltransferase family. COMT subfamily. As to quaternary structure, homodimer.

The catalysed reaction is (E)-caffeate + S-adenosyl-L-methionine = (E)-ferulate + S-adenosyl-L-homocysteine + H(+). It participates in aromatic compound metabolism; phenylpropanoid biosynthesis. In terms of biological role, catalyzes the conversion of caffeic acid to ferulic acid and of 5-hydroxyferulic acid to sinapic acid. The resulting products may subsequently be converted to the corresponding alcohols that are incorporated into lignins. The sequence is that of Caffeic acid 3-O-methyltransferase 1 (HOMT1) from Populus kitakamiensis (Aspen).